A 225-amino-acid polypeptide reads, in one-letter code: Uridylate kinase (225 aa).

9–10 (GS) is a binding site for ATP. Residue Gly-44 coordinates UMP. Residues Gly-45 and Arg-49 each contribute to the ATP site. UMP-binding positions include Asp-66 and 114–120 (THPGHTT). ATP-binding residues include Thr-140, Asn-141, Tyr-146, and Asp-149.

It belongs to the UMP kinase family. Homohexamer.

It is found in the cytoplasm. It carries out the reaction UMP + ATP = UDP + ADP. The protein operates within pyrimidine metabolism; CTP biosynthesis via de novo pathway; UDP from UMP (UMPK route): step 1/1. Its activity is regulated as follows. Inhibited by UTP. Its function is as follows. Catalyzes the reversible phosphorylation of UMP to UDP. This is Uridylate kinase from Thermococcus onnurineus (strain NA1).